The chain runs to 293 residues: Ribosomal protein L11 methyltransferase (293 aa).

S-adenosyl-L-methionine-binding residues include threonine 145, glycine 166, aspartate 188, and asparagine 230.

This sequence belongs to the methyltransferase superfamily. PrmA family.

It is found in the cytoplasm. It catalyses the reaction L-lysyl-[protein] + 3 S-adenosyl-L-methionine = N(6),N(6),N(6)-trimethyl-L-lysyl-[protein] + 3 S-adenosyl-L-homocysteine + 3 H(+). Its function is as follows. Methylates ribosomal protein L11. The protein is Ribosomal protein L11 methyltransferase of Shewanella baltica (strain OS185).